We begin with the raw amino-acid sequence, 325 residues long: Heat-inducible transcription repressor HrcA (325 aa).

Belongs to the HrcA family.

Its function is as follows. Negative regulator of class I heat shock genes (grpE-dnaK-dnaJ and groELS operons). Prevents heat-shock induction of these operons. The chain is Heat-inducible transcription repressor HrcA from Staphylococcus aureus (strain USA300).